Here is a 226-residue protein sequence, read N- to C-terminus: ATP synthase F(0) complex subunit a (226 aa).

The next 6 helical transmembrane spans lie at 12-32, 68-88, 97-117, 138-158, 164-184, and 189-209; these read PTMM…ILFP, WALM…LGLL, QLSM…ITGF, IPML…ALAV, ITAG…LMDI, and AFIT…VALI.

The protein belongs to the ATPase A chain family. In terms of assembly, component of the ATP synthase complex composed at least of ATP5F1A/subunit alpha, ATP5F1B/subunit beta, ATP5MC1/subunit c (homooctomer), MT-ATP6/subunit a, MT-ATP8/subunit 8, ATP5ME/subunit e, ATP5MF/subunit f, ATP5MG/subunit g, ATP5MK/subunit k, ATP5MJ/subunit j, ATP5F1C/subunit gamma, ATP5F1D/subunit delta, ATP5F1E/subunit epsilon, ATP5PF/subunit F6, ATP5PB/subunit b, ATP5PD/subunit d, ATP5PO/subunit OSCP. ATP synthase complex consists of a soluble F(1) head domain (subunits alpha(3) and beta(3)) - the catalytic core - and a membrane F(0) domain - the membrane proton channel (subunits c, a, 8, e, f, g, k and j). These two domains are linked by a central stalk (subunits gamma, delta, and epsilon) rotating inside the F1 region and a stationary peripheral stalk (subunits F6, b, d, and OSCP). Interacts with DNAJC30; interaction is direct.

Its subcellular location is the mitochondrion inner membrane. It carries out the reaction H(+)(in) = H(+)(out). In terms of biological role, subunit a, of the mitochondrial membrane ATP synthase complex (F(1)F(0) ATP synthase or Complex V) that produces ATP from ADP in the presence of a proton gradient across the membrane which is generated by electron transport complexes of the respiratory chain. ATP synthase complex consist of a soluble F(1) head domain - the catalytic core - and a membrane F(1) domain - the membrane proton channel. These two domains are linked by a central stalk rotating inside the F(1) region and a stationary peripheral stalk. During catalysis, ATP synthesis in the catalytic domain of F(1) is coupled via a rotary mechanism of the central stalk subunits to proton translocation. With the subunit c (ATP5MC1), forms the proton-conducting channel in the F(0) domain, that contains two crucial half-channels (inlet and outlet) that facilitate proton movement from the mitochondrial intermembrane space (IMS) into the matrix. Protons are taken up via the inlet half-channel and released through the outlet half-channel, following a Grotthuss mechanism. The protein is ATP synthase F(0) complex subunit a of Halichoerus grypus (Gray seal).